A 107-amino-acid polypeptide reads, in one-letter code: Nucleoid-associated protein Rru_A3472 (107 aa).

The protein belongs to the YbaB/EbfC family. As to quaternary structure, homodimer.

Its subcellular location is the cytoplasm. The protein localises to the nucleoid. Functionally, binds to DNA and alters its conformation. May be involved in regulation of gene expression, nucleoid organization and DNA protection. This chain is Nucleoid-associated protein Rru_A3472, found in Rhodospirillum rubrum (strain ATCC 11170 / ATH 1.1.1 / DSM 467 / LMG 4362 / NCIMB 8255 / S1).